The following is a 438-amino-acid chain: Battenin (438 aa).

A disordered region spans residues 1–27 (MGSSAGSWRRLEDSEREETDSEPQAPR). The Cytoplasmic segment spans residues 1-37 (MGSSAGSWRRLEDSEREETDSEPQAPRLDSRSVLWKN). A Phosphoserine modification is found at serine 14. A helical membrane pass occupies residues 38-58 (AVGFWILGLCNNFSYVVMLSA). Topologically, residues 59–127 (AHDILKQEQA…GLHLLPYSPR (69 aa)) are lumenal. Positions 67-87 (QASGNQSHVEPGPTPTPHNSS) are disordered. N-linked (GlcNAc...) asparagine glycosylation is found at asparagine 71 and asparagine 85. Residues 128–148 (VLVSGVCSAGSFVLVAFSQSV) traverse the membrane as a helical segment. At 149–151 (GLS) the chain is on the cytoplasmic side. The helical transmembrane segment at 152-172 (LCGVVLASISSGLGEVTFLSL) threads the bilayer. The Lumenal segment spans residues 173–182 (TAFYPSAVIS). The helical transmembrane segment at 183 to 203 (WWSSGTGGAGLLGSLSYLGLT) threads the bilayer. The Cytoplasmic portion of the chain corresponds to 204-277 (QAGLSPQHTL…DLSLQERWTV (74 aa)). Positions 239 to 261 (PGGENEAETAARQPLIGTETPES) are disordered. The Lysosomal targeting motif signature appears at 242-244 (ENE). The short motif at 253–254 (LI) is the Lysosomal targeting motif. Required for AP1G1, AP2A2 and AP3D1 interaction element. The helical transmembrane segment at 278-298 (FKGLLWYIIPLVLVYFAEYFI) threads the bilayer. Topologically, residues 299–346 (NQGLFELLFFRNTSLSHAQQYRWYQMLYQAGVFASRSSLQCCRIRFTW) are lumenal. The N-linked (GlcNAc...) asparagine glycan is linked to asparagine 310. A helical membrane pass occupies residues 347 to 367 (VLALLQCLNLALLLADVCLNF). Over 368 to 438 (LPSIYLIFII…PLHDFLCHLP (71 aa)) the chain is Cytoplasmic. Residues 409–419 (MEAACISDTLG) carry the Lysosomal targeting motif motif. Cysteine methyl ester is present on cysteine 435. Cysteine 435 is lipidated: S-farnesyl cysteine. A propeptide spans 436-438 (HLP) (removed in mature form).

The protein belongs to the battenin family. As to quaternary structure, homooligomer. Interacts with DCTN1, KIF3A, RAB7A and RILP. Interacts with CLN5. Interacts with KCNIP3. Post-translationally, highly glycosylated. Farnesylation is important for trafficking to lysosomes. In terms of tissue distribution, expressed throughout the brain, such as, in the cerebral cortex, hippocampus, cerebellum and several different cerebral nuclei (at protein level). In the cerebral cortex, expressed in all cortical layers. In the hippocampus, expressed in the granule cells in the dentate gyrus and the pyramidal cells of the hippocampus proper. In the cerebellum expressed in the granular and molecular layers, and in the Purkinje cell layer.

It is found in the lysosome membrane. Its subcellular location is the late endosome. The protein resides in the lysosome. It localises to the membrane raft. The protein localises to the golgi apparatus. It is found in the trans-Golgi network. Its subcellular location is the synapse. The protein resides in the synaptosome. It localises to the early endosome membrane. The protein localises to the late endosome membrane. It is found in the cytoplasmic vesicle. Its subcellular location is the autophagosome. Its function is as follows. Mediates microtubule-dependent, anterograde transport connecting the Golgi network, endosomes, autophagosomes, lysosomes and plasma membrane, and participates in several cellular processes such as regulation of lysosomal pH, lysosome protein degradation, receptor-mediated endocytosis, autophagy, transport of proteins and lipids from the TGN, apoptosis and synaptic transmission. Facilitates the proteins transport from trans-Golgi network (TGN)-to other membrane compartments such as transport of microdomain-associated proteins to the plasma membrane, IGF2R transport to the lysosome where it regulates the CTSD release leading to regulation of CTSD maturation and thereby APP intracellular processing. Moreover regulates CTSD activity in response to osmotic stress. Also binds galactosylceramide and transports it from the trans Golgi to the rafts, which may have immediate and downstream effects on cell survival by modulating ceramide synthesis. At the plasma membrane, regulates actin-dependent events including filopodia formation, cell migration, and pinocytosis through ARF1-CDC42 pathway and also the cytoskeleton organization through interaction with MYH10 and fodrin leading to the regulation of the plasma membrane association of Na+, K+ ATPase complex. Regulates synaptic transmission in the amygdala, hippocampus, and cerebellum through regulation of synaptic vesicles density and their proximity to active zones leading to modulation of short-term plasticity and age-dependent anxious behavior, learning and memory. Regulates autophagic vacuoles (AVs) maturation by modulating the trafficking between endocytic and autophagolysosomal/lysosomal compartments, which involves vesicle fusion leading to regulation of degradation process. Also participates in cellular homeostasis of compounds such as, water, ions, amino acids, proteins and lipids in several tissue namely in brain and kidney through regulation of their transport and synthesis. In Mus musculus (Mouse), this protein is Battenin.